Here is a 422-residue protein sequence, read N- to C-terminus: Aspartate--tRNA(Asp/Asn) ligase (422 aa).

Residue Glu-158 coordinates L-aspartate. The segment at 180-183 is aspartate; that stretch reads QLYK. Residue Arg-201 participates in L-aspartate binding. ATP contacts are provided by residues 201 to 203, 209 to 211, and Glu-345; these read RME and RHL. Residues Ser-348 and Arg-352 each coordinate L-aspartate. 393 to 396 is a binding site for ATP; that stretch reads GAER.

This sequence belongs to the class-II aminoacyl-tRNA synthetase family. Type 2 subfamily. Homodimer. Makes part of a ribonucleoprotein particle (RNP) called transamidosome that allows channelling of the aa-tRNA from non-discriminating aspartyl-tRNA synthetase active site to the GatCAB amidotransferase site. The transamidosome complex is formed by two GatCABs, one dimeric ND-AspRSs and two tRNAs(Asn) molecules.

The protein localises to the cytoplasm. It carries out the reaction tRNA(Asx) + L-aspartate + ATP = L-aspartyl-tRNA(Asx) + AMP + diphosphate. Aspartyl-tRNA synthetase with relaxed tRNA specificity since it is able to aspartylate not only its cognate tRNA(Asp) but also tRNA(Asn) with similar efficiencies. Reaction proceeds in two steps: L-aspartate is first activated by ATP to form Asp-AMP and then transferred to the acceptor end of tRNA(Asp/Asn). The polypeptide is Aspartate--tRNA(Asp/Asn) ligase (aspS2) (Thermus thermophilus (strain ATCC 27634 / DSM 579 / HB8)).